A 1225-amino-acid polypeptide reads, in one-letter code: uncharacterized protein (1225 aa).

A signal peptide spans 1–27 (MKRFLHRVKWPLLLSSIAVSLGIVAVA). Residue Cys28 is the site of N-palmitoyl cysteine attachment. Cys28 carries S-diacylglycerol cysteine lipidation. Residues 995–1014 (QSEKSSSNGGQAQLQSTQSS) form a disordered region.

The protein belongs to the MG307/MG309/MG338 family.

It localises to the cell membrane. This is an uncharacterized protein from Mycoplasma genitalium (strain ATCC 33530 / DSM 19775 / NCTC 10195 / G37) (Mycoplasmoides genitalium).